We begin with the raw amino-acid sequence, 440 residues long: Protein CyaD (440 aa).

At 1–55 (MRRALRELAARHGRVLAASWRQRHRRPAGWFDPVETEFLPSALSLQERPISPTAR) the chain is on the cytoplasmic side. A helical transmembrane segment spans residues 56–75 (WLARILMALAAGALVWSVVG). At 76-440 (KTEIVVHAAG…RHAGESLGER (365 aa)) the chain is on the periplasmic side.

Belongs to the membrane fusion protein (MFP) (TC 8.A.1) family.

Its subcellular location is the cell inner membrane. In terms of biological role, cyaD is necessary for transport of calmodulin-sensitive adenylate cyclase-hemolysin (cyclolysin). The protein is Protein CyaD (cyaD) of Bordetella pertussis (strain ATCC 9797 / DSM 5571 / CCUG 30873 / LMG 14455 / NCTC 10739 / 18323).